Reading from the N-terminus, the 67-residue chain is MSLELLSKLETKIQTALETIELLKMELEEEKQKSIGLAEQNQQLSQDLNSWNEKVTGLVGLLNEEVN.

Residues 3–59 (LELLSKLETKIQTALETIELLKMELEEEKQKSIGLAEQNQQLSQDLNSWNEKVTGLV) are a coiled coil.

The protein belongs to the ZapB family. As to quaternary structure, homodimer. The ends of the coiled-coil dimer bind to each other, forming polymers. Interacts with FtsZ.

It is found in the cytoplasm. Its function is as follows. Non-essential, abundant cell division factor that is required for proper Z-ring formation. It is recruited early to the divisome by direct interaction with FtsZ, stimulating Z-ring assembly and thereby promoting cell division earlier in the cell cycle. Its recruitment to the Z-ring requires functional FtsA or ZipA. This chain is Cell division protein ZapB, found in Shewanella woodyi (strain ATCC 51908 / MS32).